Consider the following 347-residue polypeptide: Protease HtpX homolog (347 aa).

Helical transmembrane passes span 8 to 28, 44 to 64, 76 to 96, and 141 to 163; these read VALG…ATIA, AMAL…YLFV, LSFL…TYFA, and AFAY…LALT. Histidine 174 serves as a coordination point for Zn(2+). Glutamate 175 is a catalytic residue. Residue histidine 178 coordinates Zn(2+). The next 2 helical transmembrane spans lie at 185–205 and 221–241; these read AIML…VTAV and ILAA…LLVL. A Zn(2+)-binding site is contributed by glutamate 248.

This sequence belongs to the peptidase M48B family. It depends on Zn(2+) as a cofactor.

Its subcellular location is the cell membrane. The sequence is that of Protease HtpX homolog from Pyrobaculum aerophilum (strain ATCC 51768 / DSM 7523 / JCM 9630 / CIP 104966 / NBRC 100827 / IM2).